A 512-amino-acid polypeptide reads, in one-letter code: Sodium/proline symporter (512 aa).

Helical transmembrane passes span 16 to 36, 54 to 74, 85 to 105, 139 to 159, 174 to 194, 200 to 220, 240 to 260, 286 to 306, 327 to 347, 381 to 401, 410 to 430, 438 to 458, and 467 to 487; these read WQTYIMIAVYFLILIVIGFYG, IGPYITALSAGASDMSGWMIM, LSAMWITIGLTLGAYINYFVV, IISGLIIVVFFTLYTHSGFVS, FGLILVAFIVIFYTFFGGYLA, FFQGVIMLIAMVMVPIVAMMN, LFKGLSFIGIISLFSWGLGYF, ISWMAVGLLGAVAVGLTGIAF, VLFHPLVGGFLLAAILAAIMS, FVMIGRLSVLVVAIVAIAIAW, LVGNAWAGFGASFSPLVLFAL, AGAVSGMVSGALVVIVWIAWI, and IFGLYEIIPGFIVSVIVTYVV.

The protein belongs to the sodium:solute symporter (SSF) (TC 2.A.21) family.

It is found in the cell membrane. It carries out the reaction L-proline(in) + Na(+)(in) = L-proline(out) + Na(+)(out). In terms of biological role, catalyzes the sodium-dependent uptake of extracellular L-proline. Since most S.aureus strains are L-proline auxotrophs, this transporter may aid the bacterial persistence during an infection of tissues with low proline concentrations. The polypeptide is Sodium/proline symporter (putP) (Staphylococcus aureus (strain Mu3 / ATCC 700698)).